The primary structure comprises 272 residues: NH(3)-dependent NAD(+) synthetase (272 aa).

45-52 (GISGGQDS) lines the ATP pocket. Position 51 (aspartate 51) interacts with Mg(2+). Arginine 138 lines the deamido-NAD(+) pocket. Residue threonine 158 participates in ATP binding. Glutamate 163 is a binding site for Mg(2+). Residues lysine 171 and aspartate 178 each coordinate deamido-NAD(+). The ATP site is built by lysine 187 and threonine 209. Position 258-259 (258-259 (HK)) interacts with deamido-NAD(+).

It belongs to the NAD synthetase family. In terms of assembly, homodimer.

The catalysed reaction is deamido-NAD(+) + NH4(+) + ATP = AMP + diphosphate + NAD(+) + H(+). It functions in the pathway cofactor biosynthesis; NAD(+) biosynthesis; NAD(+) from deamido-NAD(+) (ammonia route): step 1/1. In terms of biological role, catalyzes the ATP-dependent amidation of deamido-NAD to form NAD. Uses ammonia as a nitrogen source. The protein is NH(3)-dependent NAD(+) synthetase of Bacillus licheniformis (strain ATCC 14580 / DSM 13 / JCM 2505 / CCUG 7422 / NBRC 12200 / NCIMB 9375 / NCTC 10341 / NRRL NRS-1264 / Gibson 46).